Reading from the N-terminus, the 360-residue chain is Alkanal monooxygenase alpha chain (360 aa).

Belongs to the bacterial luciferase oxidoreductase family. As to quaternary structure, heterodimer of an alpha and a beta chain.

It carries out the reaction a long-chain fatty aldehyde + FMNH2 + O2 = a long-chain fatty acid + hnu + FMN + H2O + 2 H(+). Its function is as follows. Light-emitting reaction in luminous bacteria. In Photorhabdus luminescens (Xenorhabdus luminescens), this protein is Alkanal monooxygenase alpha chain (luxA).